Here is a 139-residue protein sequence, read N- to C-terminus: Small ribosomal subunit protein uS9 (139 aa).

The protein belongs to the universal ribosomal protein uS9 family.

In Coxiella burnetii (strain CbuK_Q154) (Coxiella burnetii (strain Q154)), this protein is Small ribosomal subunit protein uS9.